We begin with the raw amino-acid sequence, 203 residues long: Pyridoxal 5'-phosphate synthase subunit PdxT (203 aa).

49–51 (GES) provides a ligand contact to L-glutamine. Cys81 serves as the catalytic Nucleophile. L-glutamine-binding positions include Arg110 and 139–140 (IR). Active-site charge relay system residues include His175 and Glu177.

The protein belongs to the glutaminase PdxT/SNO family. In the presence of PdxS, forms a dodecamer of heterodimers. Only shows activity in the heterodimer.

The enzyme catalyses aldehydo-D-ribose 5-phosphate + D-glyceraldehyde 3-phosphate + L-glutamine = pyridoxal 5'-phosphate + L-glutamate + phosphate + 3 H2O + H(+). The catalysed reaction is L-glutamine + H2O = L-glutamate + NH4(+). It participates in cofactor biosynthesis; pyridoxal 5'-phosphate biosynthesis. Functionally, catalyzes the hydrolysis of glutamine to glutamate and ammonia as part of the biosynthesis of pyridoxal 5'-phosphate. The resulting ammonia molecule is channeled to the active site of PdxS. This is Pyridoxal 5'-phosphate synthase subunit PdxT from Parafrankia sp. (strain EAN1pec).